A 400-amino-acid chain; its full sequence is D-alanyl-D-alanine carboxypeptidase DacC (400 aa).

An N-terminal signal peptide occupies residues 1–27 (MTQYSSLLRGLAAGSAFLFLFAPTAFA). Ser-66 functions as the Acyl-ester intermediate in the catalytic mechanism. Lys-69 acts as the Proton acceptor in catalysis. Residue Ser-132 is part of the active site. Lys-235 lines the substrate pocket. The interval 383-400 (VWDFVMMKFHQWFGSWFS) is required for inner membrane binding.

It belongs to the peptidase S11 family.

The protein resides in the cell inner membrane. The enzyme catalyses Preferential cleavage: (Ac)2-L-Lys-D-Ala-|-D-Ala. Also transpeptidation of peptidyl-alanyl moieties that are N-acyl substituents of D-alanine.. It participates in cell wall biogenesis; peptidoglycan biosynthesis. Removes C-terminal D-alanyl residues from sugar-peptide cell wall precursors. This is D-alanyl-D-alanine carboxypeptidase DacC (dacC) from Escherichia coli (strain K12).